Consider the following 281-residue polypeptide: MILTKAQYDEIAQCLVSVPPTRQSLRKLKQRFPSQSQATLLSIFSQEYQKHIKRTHAKHHTSEAIESYYQRYLNGVVKNGAAPVLLDLANEVDYAPSLMARLILERFLQEHEETPPSKSIINSMLRDPSQIPDGVLANQVYQCIVNDCCYGPLVDCIKHAIGHEHEVLLRDLLLEKNLSFLDEDQLRAKGYDKTPDFILQVPVAVEGHIIHWIESKASFGDECSHHAYLHDQFWSYWNRFGPGLVIYWYGFIQELDCNRERGILLKACFPTNIVTLCHSIA.

Thr114 carries the phosphothreonine modification.

The protein localises to the nucleus. It localises to the cytoplasm. Its function is as follows. Plays a role in erythroid cell differentiation. This is CDAN1-interacting nuclease 1 from Homo sapiens (Human).